A 509-amino-acid polypeptide reads, in one-letter code: ATP synthase subunit alpha (509 aa).

169 to 176 (GDRQTGKT) serves as a coordination point for ATP.

This sequence belongs to the ATPase alpha/beta chains family. As to quaternary structure, F-type ATPases have 2 components, CF(1) - the catalytic core - and CF(0) - the membrane proton channel. CF(1) has five subunits: alpha(3), beta(3), gamma(1), delta(1), epsilon(1). CF(0) has three main subunits: a(1), b(2) and c(9-12). The alpha and beta chains form an alternating ring which encloses part of the gamma chain. CF(1) is attached to CF(0) by a central stalk formed by the gamma and epsilon chains, while a peripheral stalk is formed by the delta and b chains.

The protein localises to the cell inner membrane. It catalyses the reaction ATP + H2O + 4 H(+)(in) = ADP + phosphate + 5 H(+)(out). Produces ATP from ADP in the presence of a proton gradient across the membrane. The alpha chain is a regulatory subunit. This chain is ATP synthase subunit alpha, found in Brucella canis (strain ATCC 23365 / NCTC 10854 / RM-666).